The primary structure comprises 183 residues: Ferritin light chain 1 (183 aa).

In terms of domain architecture, Ferritin-like diiron spans 7-156 (QNYSTEVEAA…NHLTNLRRVA (150 aa)). Fe cation is bound by residues glutamate 54, glutamate 57, glutamate 58, glutamate 61, and glutamate 64.

It belongs to the ferritin family. In terms of assembly, oligomer of 24 subunits. There are two types of subunits: L (light) chain and H (heavy) chain. The major chain can be light or heavy, depending on the species and tissue type. The functional molecule forms a roughly spherical shell with a diameter of 12 nm and contains a central cavity into which the insoluble mineral iron core is deposited. Interacts with NCOA4. In terms of tissue distribution, in rat liver, the light chain is the major chain.

It localises to the cytoplasmic vesicle. The protein resides in the autophagosome. It is found in the cytoplasm. The protein localises to the autolysosome. Stores iron in a soluble, non-toxic, readily available form. Important for iron homeostasis. Iron is taken up in the ferrous form and deposited as ferric hydroxides after oxidation. Also plays a role in delivery of iron to cells. Mediates iron uptake in capsule cells of the developing kidney. Delivery to lysosomes by the cargo receptor NCOA4 for autophagic degradation and release or iron. This Rattus norvegicus (Rat) protein is Ferritin light chain 1 (Ftl1).